The following is a 314-amino-acid chain: Putative S-adenosyl-L-methionine-dependent methyltransferase MMAR_5323 (314 aa).

Residues D132 and 161-162 (DL) contribute to the S-adenosyl-L-methionine site.

Belongs to the UPF0677 family.

Exhibits S-adenosyl-L-methionine-dependent methyltransferase activity. This is Putative S-adenosyl-L-methionine-dependent methyltransferase MMAR_5323 from Mycobacterium marinum (strain ATCC BAA-535 / M).